Here is a 416-residue protein sequence, read N- to C-terminus: CinA-like protein (416 aa).

The protein belongs to the CinA family.

The chain is CinA-like protein from Rippkaea orientalis (strain PCC 8801 / RF-1) (Cyanothece sp. (strain PCC 8801)).